We begin with the raw amino-acid sequence, 241 residues long: Ubiquinone biosynthesis O-methyltransferase (241 aa).

Positions 46, 66, 87, and 131 each coordinate S-adenosyl-L-methionine.

It belongs to the methyltransferase superfamily. UbiG/COQ3 family.

It carries out the reaction a 3-demethylubiquinol + S-adenosyl-L-methionine = a ubiquinol + S-adenosyl-L-homocysteine + H(+). The enzyme catalyses a 3-(all-trans-polyprenyl)benzene-1,2-diol + S-adenosyl-L-methionine = a 2-methoxy-6-(all-trans-polyprenyl)phenol + S-adenosyl-L-homocysteine + H(+). It functions in the pathway cofactor biosynthesis; ubiquinone biosynthesis. Its function is as follows. O-methyltransferase that catalyzes the 2 O-methylation steps in the ubiquinone biosynthetic pathway. The polypeptide is Ubiquinone biosynthesis O-methyltransferase (Bordetella pertussis (strain Tohama I / ATCC BAA-589 / NCTC 13251)).